Consider the following 118-residue polypeptide: uncharacterized protein (118 aa).

A helical membrane pass occupies residues 7–27 (LLTGLFVGGIIGGAAVLLTAP). A coiled-coil region spans residues 31–118 (KQLREKMKTN…IRQLEKTLQN (88 aa)).

Its subcellular location is the cell membrane. This is an uncharacterized protein from Bacillus subtilis (strain 168).